Consider the following 370-residue polypeptide: Chaperone protein DnaJ (370 aa).

The 65-residue stretch at 6–70 folds into the J domain; the sequence is DYYEVLGVQR…EKRSMYDRFG (65 aa). A CR-type zinc finger spans residues 128 to 208; sequence GVEKTIEFRR…CRGEGRVRQT (81 aa). Zn(2+) is bound by residues C141, C144, C158, C161, C182, C185, C196, and C199. CXXCXGXG motif repeat units follow at residues 141-148, 158-165, 182-189, and 196-203; these read CPACRGSG, CPKCGGLG, CDMCRGEG, and CRECRGEG.

This sequence belongs to the DnaJ family. Homodimer. It depends on Zn(2+) as a cofactor.

The protein localises to the cytoplasm. Participates actively in the response to hyperosmotic and heat shock by preventing the aggregation of stress-denatured proteins and by disaggregating proteins, also in an autonomous, DnaK-independent fashion. Unfolded proteins bind initially to DnaJ; upon interaction with the DnaJ-bound protein, DnaK hydrolyzes its bound ATP, resulting in the formation of a stable complex. GrpE releases ADP from DnaK; ATP binding to DnaK triggers the release of the substrate protein, thus completing the reaction cycle. Several rounds of ATP-dependent interactions between DnaJ, DnaK and GrpE are required for fully efficient folding. Also involved, together with DnaK and GrpE, in the DNA replication of plasmids through activation of initiation proteins. This chain is Chaperone protein DnaJ, found in Roseiflexus sp. (strain RS-1).